We begin with the raw amino-acid sequence, 630 residues long: MGAEGLQGEGEVPPQGAGVPGQVQVGVHQEARHGESLQWGRAGPRPPSPSRDPRGLPVEAGGGGALRGQGQEPPRPGEKLLPRRGQGEAHRRGGTGLDFIATRDEVEALLLEANLIKAHRPLYNVLLKDDKHYPFLKLTNEPFPTLLVVRRVEEDGAKYYGPFPEAGALRRIKTLIDRLFPLRKNSGYPMKRRRYPCLNYSMGRCLAPCVGKADPEAYQEVVRQVEAVLEGRVDGLLQELEAKMREAARRLEFERAAEIRDQMEALRAFFSTDQQAFDPEMGDLDFLGMARSGALAVVQLYQVRSGRILGRISRVVEKEEATDEEILWAFLRDHYLEASPLPPLVLLPFPLEDLESLAELLKRRAGRKVELRVPKKGEKARLLELAERNARLALETELKLRERRGEHPALKALQDLLGLPARPWRLEGYDISHLQGQARVFSIAVFEGGRPKRQEYRRMRLKAGNDDYAAMEEGVFRRYTGSLKDLPLPDLLLIDGGVGQVRAAARALEKAGLRLPLVGLAKGEEVLVTPEGRELRLPLTHPALQLLIHLRDEAHQNGLRYHRKRRSEELFRVLQGIPGIGEKRRRLLLERYGGLRALKEAPLEELARLPGMSLEAARALKAALAEEEPA.

The disordered stretch occupies residues 1-96 (MGAEGLQGEG…GEAHRRGGTG (96 aa)). The span at 9–28 (EGEVPPQGAGVPGQVQVGVH) shows a compositional bias: low complexity. In terms of domain architecture, GIY-YIG spans 52 to 125 (DPRGLPVEAG…IKAHRPLYNV (74 aa)). Residues 75–91 (RPGEKLLPRRGQGEAHR) are compositionally biased toward basic and acidic residues. The UVR domain maps to 234 to 269 (DGLLQELEAKMREAARRLEFERAAEIRDQMEALRAF).

This sequence belongs to the UvrC family. As to quaternary structure, interacts with UvrB in an incision complex.

Its subcellular location is the cytoplasm. Its function is as follows. The UvrABC repair system catalyzes the recognition and processing of DNA lesions. UvrC both incises the 5' and 3' sides of the lesion. The N-terminal half is responsible for the 3' incision and the C-terminal half is responsible for the 5' incision. In Thermus thermophilus (strain ATCC BAA-163 / DSM 7039 / HB27), this protein is UvrABC system protein C.